The following is a 342-amino-acid chain: Delta(6)-protoilludene synthase 8 (342 aa).

Residue Asp-81 participates in Mg(2+) binding. A DDXXD motif motif is present at residues 93–97; sequence RDMVD. Mg(2+)-binding residues include Asn-217, Ser-221, and Glu-225. The NSE/DTE motif motif lies at 217-225; sequence NDLVSYNRE. Residues Arg-305 and Tyr-306 each coordinate (2E,6E)-farnesyl diphosphate.

It belongs to the terpene synthase family. Requires Mg(2+) as cofactor.

The enzyme catalyses (2E,6E)-farnesyl diphosphate = Delta(6)-protoilludene + diphosphate. Functionally, terpene cyclase that catalyzes the cyclization of farnesyl diphosphate (FPP) to delta(6)-protoilludene. This is Delta(6)-protoilludene synthase 8 from Postia placenta (strain ATCC 44394 / Madison 698-R) (Brown rot fungus).